Consider the following 338-residue polypeptide: Ketoreductase azaE (338 aa).

NADP(+)-binding residues include Lys41 and Tyr166.

The protein belongs to the NAD(P)-dependent epimerase/dehydratase family. Dihydroflavonol-4-reductase subfamily.

It participates in secondary metabolite biosynthesis. In terms of biological role, ketoreductase; part of the gene cluster that mediates the biosynthesis of azaphilones, a class of fungal metabolites characterized by a highly oxygenated pyrano-quinone bicyclic core and exhibiting a broad range of bioactivities. In the first step, the non-reducing polyketide synthase azaA forms the hexaketide precursor from successive condensations of five malonyl-CoA units, presumably with a simple acetyl-CoA starter unit. The reactive polyketide chain then undergoes a PT-mediated C2-C7 cyclization to afford the aromatic ring and is eventually released as an aldehyde through the R-domain. The putative ketoreductase azaE is proposed to catalyze the reduction of the terminal ketone resulting in the early culture product FK17-P2a. The monooxygenase azaH was demonstrated to be the only enzyme required to convert FK17-P2a to azanigerone E. AzaH first hydroxylates the benzaldehyde intermediate FK17-P2a at C4, which triggers the formation of the pyran-ring to afford azanigerone E. In parallel, the 2,4-dimethylhexanoyl chain is synthesized by the HR-PKS azaB and is proposed to be transferred to the C4-hydroxyl of azanigerone E by the acyltransferase azaD directly from the ACP domain of azaB. Alternatively, the 2,4-dimethyl-hexanoyl chain may be offloaded from the HR-PKS as a carboxylic acid and converted to an acyl-CoA by azaF. The resulting acyl-CoA molecule could then be taken up as a substrate by AzaD to form azanigerone B. To yield the carboxylic acid substituent in azanigerone A, the hydroxypropyl side chain of azanigerone B would need to undergo a C-C oxidative cleavage catalyzed by cytochrome P450 AzaI. AzaI is proposed to act on a vicinal diol that leads to a C-C bond scission either through an alkoxyradical intermediate or a peroxy complex. In the biosynthesis of azanigerone A, azanigerone B first undergoes hydroxylation at C10, possibly catalyzed by one of the two FAD-dependent monooxygenases encoded in the cluster, azaG or azaL, resulting in the vicinal diol azanigerone C. Oxidative cleavage of azanigerone C by azaI would yield the corresponding aldehyde derivative of azanigerone A. Finally, the dehydrogenase azaJ is proposed to convert the aldehyde functional group into the carboxylic acid, completing the conversion from azanigerone B to azanigerone A. Alternatively, the oxidation of aldehyde to carboxylic acid may be catalyzed by the same P450 enzyme azaI via consecutive oxidation or by endogenous alcohol dehydrogenase. This is Ketoreductase azaE from Aspergillus niger (strain ATCC 1015 / CBS 113.46 / FGSC A1144 / LSHB Ac4 / NCTC 3858a / NRRL 328 / USDA 3528.7).